Consider the following 306-residue polypeptide: uncharacterized protein (306 aa).

This is an uncharacterized protein from Saccharomyces cerevisiae (strain ATCC 204508 / S288c) (Baker's yeast).